The chain runs to 800 residues: Heterogeneous nuclear ribonucleoprotein U (800 aa).

Serine 2 is modified (N-acetylserine). Serine 4 is modified (phosphoserine). The SAP domain maps to 8–42 (VKKLKVSELKEELKKRRLSDKGLKADLMDRLQAAL). Lysine 17 and lysine 21 each carry N6-acetyllysine. Residues 41-257 (ALDNEAGGRP…PQPPVEEEDE (217 aa)) form a disordered region. Serine 58 is modified (phosphoserine). Composition is skewed to low complexity over residues 71 to 80 (AGLEQEAAAG) and 103 to 113 (ENGAAGAADAG). Acidic residues-rich tracts occupy residues 114-128 (AMEE…ENGD) and 134-147 (EGED…EGAG). The span at 153 to 173 (GEQQSQPPAAAAQQQPSQQRG) shows a compositional bias: low complexity. Lysine 181 bears the N6-acetyllysine mark. Serine 182 carries the ADP-ribosylserine modification. A compositionally biased stretch (low complexity) spans 194–205 (APPGARQGQQQA). Residues 209-242 (GKTEQKGGDKKRGVKRPREDHGRGYFEYIEENKY) show a composition bias toward basic and acidic residues. The residue at position 231 (arginine 231) is a Citrulline. Lysine 241 carries the N6-acetyllysine; alternate modification. Residue lysine 241 forms a Glycyl lysine isopeptide (Lys-Gly) (interchain with G-Cter in SUMO1); alternate linkage. A Glycyl lysine isopeptide (Lys-Gly) (interchain with G-Cter in SUMO2); alternate cross-link involves residue lysine 241. The residue at position 242 (tyrosine 242) is a Phosphotyrosine. Phosphoserine occurs at positions 243 and 247. Residues 244–440 (RAKSPQPPVE…VEFNFGQKEK (197 aa)) enclose the B30.2/SPRY domain. Phosphothreonine is present on threonine 262. Lysine 328 is modified (N6-acetyllysine). Residues 464–648 (PKGPEEKKDC…QKLLEQYKEE (185 aa)) form an ATPase domain region. Lysine 471 is covalently cross-linked (Glycyl lysine isopeptide (Lys-Gly) (interchain with G-Cter in SUMO2)). Residue 480–487 (GLPGAGKT) participates in ATP binding. N6-acetyllysine; alternate is present on residues lysine 492 and lysine 500. Glycyl lysine isopeptide (Lys-Gly) (interchain with G-Cter in SUMO2); alternate cross-links involve residues lysine 492 and lysine 500. Phosphothreonine is present on threonine 508. Lysine 512 participates in a covalent cross-link: Glycyl lysine isopeptide (Lys-Gly) (interchain with G-Cter in SUMO2). Position 527 is an N6-acetyllysine (lysine 527). At lysine 541 the chain carries N6-acetyllysine; alternate. Lysine 541 participates in a covalent cross-link: Glycyl lysine isopeptide (Lys-Gly) (interchain with G-Cter in SUMO2); alternate. A Glycyl lysine isopeptide (Lys-Gly) (interchain with G-Cter in SUMO2) cross-link involves residue lysine 550. At threonine 558 the chain carries Phosphothreonine. Residues lysine 585 and lysine 602 each participate in a glycyl lysine isopeptide (Lys-Gly) (interchain with G-Cter in SUMO2) cross-link. The actin-binding stretch occupies residues 587–602 (EDYKQRTQKKAEVEGK). Position 611 is an N6-acetyllysine; alternate (lysine 611). Lysine 611 participates in a covalent cross-link: Glycyl lysine isopeptide (Lys-Gly) (interchain with G-Cter in SUMO2); alternate. A coiled-coil region spans residues 626 to 653 (DEITYVELQKEEAQKLLEQYKEESKKAL). Glycyl lysine isopeptide (Lys-Gly) (interchain with G-Cter in SUMO2) cross-links involve residues lysine 640 and lysine 646. A compositionally biased stretch (basic and acidic residues) spans 647 to 659 (EESKKALPPEKKQ). The disordered stretch occupies residues 647–729 (EESKKALPPE…GSGGIGYPYP (83 aa)). Arginine 678 carries the post-translational modification Omega-N-methylarginine. The span at 686-704 (GGFNMRGGNFRGGAPGNRG) shows a compositional bias: gly residues. The tract at residues 690 to 715 (MRGGNFRGGAPGNRGGYNRRGNMPQR) is RNA-binding RGG-box. Asymmetric dimethylarginine occurs at positions 691, 696, and 703. An asymmetric dimethylarginine; alternate mark is found at arginine 709 and arginine 715. Residues arginine 709 and arginine 715 each carry the omega-N-methylarginine; alternate modification. Residues 715-725 (RGGGGGSGGIG) show a composition bias toward gly residues. An asymmetric dimethylarginine mark is found at arginine 730 and arginine 737. Residues 745–774 (NYNRGGMPNRGNYNQNFRGRGNNRGYKNQS) are disordered. Lysine 789 is modified (N6-acetyllysine; alternate). A Glycyl lysine isopeptide (Lys-Gly) (interchain with G-Cter in SUMO2); alternate cross-link involves residue lysine 789.

Oligomer (via ATPase domain and RNA-binding RGG-box region); oligomerization occurs upon ATP-binding in a chromatin-associated RNAs (caRNAs)- and transcription-dependent manner and is required for chromatin decompaction. ATP hydrolysis is required to cycle from an oligomeric to monomeric state to compact chromatin. Component of the coding region determinant (CRD)-mediated complex, composed of DHX9, HNRNPU, IGF2BP1, SYNCRIP and YBX1. Identified in the spliceosome C complex. Identified in a IGF2BP1-dependent mRNP granule complex containing untranslated mRNAs. Associates with heterogeneous nuclear ribonucleoprotein (hnRNP) particles. Associates (via middle region) with the C-terminal domain (CTD) RNA polymerase II (Pol II) holoenzyme; this association occurs in a RNA-independent manner. Associates (via middle region) with the core-TFIIH basal transcription factor complex; this association inhibits the CTD phosphorylation of RNA polymerase II holoenzyme by down-regulating TFIIH kinase activity. Associates with the telomerase holoenzyme complex. Associates with spindle microtubules (MTs) in a TPX2-dependent manner. Interacts (via C-terminus) with actin; this interaction is direct and mediates association with the phosphorylated CTD of RNA polymerase II and is disrupted in presence of the long non-coding H19 RNA. Interacts with AURKA. Interacts (via C-terminus) with CBX5; this interaction is, at least in part, RNA-dependent. Interacts with CR2. Interacts with CRY1. Interacts (via C-terminus) with EP300; this interaction enhances DNA-binding to nuclear scaffold/matrix attachment region (S/MAR) elements. Interacts with ERBB4. Interacts with GEMIN5. Interacts with IGF2BP1. Interacts with IGF2BP2 and IGF2BP3. Interacts with NCL; this interaction occurs during mitosis. Interacts (via C-terminus) with NR3C1 (via C-terminus). Interacts with PLK1; this interaction induces phosphorylation of HNRNPU at Ser-58 in mitosis. Interacts with POU3F4. Interacts with SMARCA4; this interaction occurs in embryonic stem cells and stimulates global Pol II-mediated transcription. Interacts (via C-terminus) with TOP2A; this interaction protects the topoisomerase TOP2A from degradation and positively regulates the relaxation of supercoiled DNA by TOP2A in a RNA-dependent manner. Interacts with TPX2; this interaction recruits HNRNPU to spindle microtubules (MTs). Interacts with UBQLN2. Interacts (via RNA-binding RGG-box region) with ZBTB7B; the interaction facilitates the recruitment of long non-coding RNA Blnc1 by ZBTB7B. Interacts with ERCC6. Post-translationally, cleaved at Asp-94 by CASP3 during T-cell apoptosis, resulting in a loss of DNA- and chromatin-binding activities. In terms of processing, extensively phosphorylated. Phosphorylated on Ser-58 by PLK1 and dephosphorylated by protein phosphatase 2A (PP2A) in mitosis. Arg-709 and Arg-715 are dimethylated, probably to asymmetric dimethylarginine. Post-translationally, citrullinated by PADI4.

It localises to the nucleus. The protein localises to the nucleus matrix. Its subcellular location is the chromosome. It is found in the nucleus speckle. The protein resides in the cytoplasm. It localises to the cytoskeleton. The protein localises to the microtubule organizing center. Its subcellular location is the centrosome. It is found in the centromere. The protein resides in the kinetochore. It localises to the spindle. The protein localises to the spindle pole. Its subcellular location is the midbody. It is found in the cell surface. The protein resides in the cytoplasmic granule. Functionally, DNA- and RNA-binding protein involved in several cellular processes such as nuclear chromatin organization, telomere-length regulation, transcription, mRNA alternative splicing and stability, Xist-mediated transcriptional silencing and mitotic cell progression. Plays a role in the regulation of interphase large-scale gene-rich chromatin organization through chromatin-associated RNAs (caRNAs) in a transcription-dependent manner, and thereby maintains genomic stability. Required for the localization of the long non-coding Xist RNA on the inactive chromosome X (Xi) and the subsequent initiation and maintenance of X-linked transcriptional gene silencing during X-inactivation. Plays a role as a RNA polymerase II (Pol II) holoenzyme transcription regulator. Promotes transcription initiation by direct association with the core-TFIIH basal transcription factor complex for the assembly of a functional pre-initiation complex with Pol II in a actin-dependent manner. Blocks Pol II transcription elongation activity by inhibiting the C-terminal domain (CTD) phosphorylation of Pol II and dissociates from Pol II pre-initiation complex prior to productive transcription elongation. Positively regulates CBX5-induced transcriptional gene silencing and retention of CBX5 in the nucleus. Negatively regulates glucocorticoid-mediated transcriptional activation. Key regulator of transcription initiation and elongation in embryonic stem cells upon leukemia inhibitory factor (LIF) signaling. Involved in the long non-coding RNA H19-mediated Pol II transcriptional repression. Participates in the circadian regulation of the core clock component BMAL1 transcription. Plays a role in the regulation of telomere length. Plays a role as a global pre-mRNA alternative splicing modulator by regulating U2 small nuclear ribonucleoprotein (snRNP) biogenesis. Plays a role in mRNA stability. Component of the CRD-mediated complex that promotes MYC mRNA stabilization. Enhances the expression of specific genes, such as tumor necrosis factor TNFA, by regulating mRNA stability, possibly through binding to the 3'-untranslated region (UTR). Plays a role in mitotic cell cycle regulation. Involved in the formation of stable mitotic spindle microtubules (MTs) attachment to kinetochore, spindle organization and chromosome congression. Phosphorylation at Ser-58 by PLK1 is required for chromosome alignement and segregation and progression through mitosis. Also contributes to the targeting of AURKA to mitotic spindle MTs. Binds to double- and single-stranded DNA and RNA, poly(A), poly(C) and poly(G) oligoribonucleotides. Binds to chromatin-associated RNAs (caRNAs). Associates with chromatin to scaffold/matrix attachment region (S/MAR) elements in a chromatin-associated RNAs (caRNAs)-dependent manner. Binds (via RNA-binding RGG-box region) to the long non-coding Xist RNA; this binding is direct and bridges the Xist RNA and the inactive chromosome X (Xi). Binds the long non-coding H19 RNA. Binds to SMN1/2 pre-mRNAs at G/U-rich regions. Binds to small nuclear RNAs (snRNAs). Binds to the 3'-UTR of TNFA mRNA. Also negatively regulates embryonic stem cell differentiation upon LIF signaling. Required for embryonic development. Binds to brown fat long non-coding RNA 1 (Blnc1); facilitates the recruitment of Blnc1 by ZBTB7B required to drive brown and beige fat development and thermogenesis. The sequence is that of Heterogeneous nuclear ribonucleoprotein U from Mus musculus (Mouse).